Here is a 226-residue protein sequence, read N- to C-terminus: Late protein I226R (226 aa).

A signal peptide spans 1-16 (MKMETFLVCLFHNAAG). Asparagine 164 carries an N-linked (GlcNAc...) asparagine; by host glycan.

Belongs to the asfivirus I226R family.

Functionally, plays a role in the inhibition of host NF-kappa-B and IRF3 signaling pathways. Mechanistically, promotes the degradation of host IKBKG through enhancing its ubiquitination leading to inhibition of both pathways. This chain is Late protein I226R, found in African swine fever virus (isolate Pig/Kenya/KEN-50/1950) (ASFV).